Reading from the N-terminus, the 239-residue chain is Putative 3-methyladenine DNA glycosylase (239 aa).

The protein belongs to the DNA glycosylase MPG family.

In Pseudomonas aeruginosa (strain LESB58), this protein is Putative 3-methyladenine DNA glycosylase.